Here is a 200-residue protein sequence, read N- to C-terminus: MSLFALCYMFAAYLLGSISSAVIVCRLAGLPDPRRHGSHNPGATNVLRIGGRWAALAVFVFDVLKGMIPVWCGYYLGLTQFELGMVALGACLGHIFPIFFKFRGGKGVATAFGAIAPIGWGVMATMLGTWVLVFVISGYSSLSAVISALLVPLYVWWFRPEFTFPVALVCCLLVYRHHDNIQRLWRGQEDRIWGKKSNKK.

5 helical membrane-spanning segments follow: residues 4-24 (FALCYMFAAYLLGSISSAVIV), 53-73 (WAALAVFVFDVLKGMIPVWCG), 80-100 (QFELGMVALGACLGHIFPIFF), 115-135 (IAPIGWGVMATMLGTWVLVFV), and 138-158 (GYSSLSAVISALLVPLYVWWF).

It belongs to the PlsY family. As to quaternary structure, probably interacts with PlsX.

The protein localises to the cell inner membrane. The enzyme catalyses an acyl phosphate + sn-glycerol 3-phosphate = a 1-acyl-sn-glycero-3-phosphate + phosphate. It participates in lipid metabolism; phospholipid metabolism. Catalyzes the transfer of an acyl group from acyl-phosphate (acyl-PO(4)) to glycerol-3-phosphate (G3P) to form lysophosphatidic acid (LPA). This enzyme utilizes acyl-phosphate as fatty acyl donor, but not acyl-CoA or acyl-ACP. This chain is Glycerol-3-phosphate acyltransferase, found in Actinobacillus succinogenes (strain ATCC 55618 / DSM 22257 / CCUG 43843 / 130Z).